An 892-amino-acid polypeptide reads, in one-letter code: Translation initiation factor IF-2 (892 aa).

The segment covering 138–185 (QRNLAEQQRLAEVDRQRVEEQERKRREEEQAELERQKTESRVVEEILV) has biased composition (basic and acidic residues). 2 disordered regions span residues 138 to 250 (QRNL…EDDS) and 262 to 298 (AAER…SGAH). Residues 207–219 (LPRTVRPTPAARP) show a composition bias toward low complexity. Residues 391 to 560 (PRPPVVTIMG…SIQAEVLELK (170 aa)) form the tr-type G domain. GTP is bound by residues 400-407 (GHVDHGKT), 446-450 (DTPGH), and 500-503 (SKID).

The protein belongs to the TRAFAC class translation factor GTPase superfamily. Classic translation factor GTPase family. IF-2 subfamily.

The protein localises to the cytoplasm. Functionally, one of the essential components for the initiation of protein synthesis. Protects formylmethionyl-tRNA from spontaneous hydrolysis and promotes its binding to the 30S ribosomal subunits. Also involved in the hydrolysis of GTP during the formation of the 70S ribosomal complex. The chain is Translation initiation factor IF-2 from Xylella fastidiosa (strain Temecula1 / ATCC 700964).